The following is a 61-amino-acid chain: Photosystem II reaction center X protein (61 aa).

Residues 26 to 46 (IGSFIAAALLIVIPATAFLIF) form a helical membrane-spanning segment.

Belongs to the PsbX family. Type 2 subfamily. As to quaternary structure, PSII consists of a core antenna complex that captures photons, and an electron transfer chain that converts photonic excitation into a charge separation. PSII forms dimeric complexes.

The protein resides in the cellular thylakoid membrane. In terms of biological role, involved in the binding and/or turnover of quinones at the Q(B) site of Photosystem II. The protein is Photosystem II reaction center X protein of Prochlorococcus marinus (strain MIT 9301).